Consider the following 406-residue polypeptide: Elongation factor Tu-B (406 aa).

The 206-residue stretch at 10-215 (KPHVNVGTIG…AIDEYIPTPV (206 aa)) folds into the tr-type G domain. The G1 stretch occupies residues 19–26 (GHVDHGKT). 19-26 (GHVDHGKT) contributes to the GTP binding site. Threonine 26 is a binding site for Mg(2+). The G2 stretch occupies residues 61–65 (GITIN). Residues 82 to 85 (DCPG) form a G3 region. GTP is bound by residues 82–86 (DCPGH) and 137–140 (NKVD). Positions 137-140 (NKVD) are G4. Residues 175–177 (SAL) are G5. Phosphothreonine is present on threonine 395.

The protein belongs to the TRAFAC class translation factor GTPase superfamily. Classic translation factor GTPase family. EF-Tu/EF-1A subfamily. Monomer. Post-translationally, phosphorylated on a threonine.

It is found in the cytoplasm. It catalyses the reaction GTP + H2O = GDP + phosphate + H(+). In terms of biological role, GTP hydrolase that promotes the GTP-dependent binding of aminoacyl-tRNA to the A-site of ribosomes during protein biosynthesis. Protects glycyl-tRNA(Gly) from hydrolysis by E.coli D-aminoacyl-tRNA deacylase (dtd). This chain is Elongation factor Tu-B, found in Thermus thermophilus (strain ATCC 27634 / DSM 579 / HB8).